Reading from the N-terminus, the 97-residue chain is Citrate lyase acyl carrier protein (97 aa).

At serine 14 the chain carries O-(phosphoribosyl dephospho-coenzyme A)serine.

Belongs to the CitD family. In terms of assembly, oligomer with a subunit composition of (alpha,beta,gamma)6.

It is found in the cytoplasm. Its function is as follows. Covalent carrier of the coenzyme of citrate lyase. The sequence is that of Citrate lyase acyl carrier protein from Lactobacillus acidophilus (strain ATCC 700396 / NCK56 / N2 / NCFM).